Here is a 183-residue protein sequence, read N- to C-terminus: Translation initiation factor IF-3 (183 aa).

The protein belongs to the IF-3 family. Monomer.

It localises to the cytoplasm. Its function is as follows. IF-3 binds to the 30S ribosomal subunit and shifts the equilibrium between 70S ribosomes and their 50S and 30S subunits in favor of the free subunits, thus enhancing the availability of 30S subunits on which protein synthesis initiation begins. The chain is Translation initiation factor IF-3 from Pseudomonas aeruginosa (strain ATCC 15692 / DSM 22644 / CIP 104116 / JCM 14847 / LMG 12228 / 1C / PRS 101 / PAO1).